The sequence spans 184 residues: Structural protein V8 (184 aa).

Positions 14–35 (IYNKSNTLTNTPSNPTGNTNTL) are disordered.

The protein belongs to the sputnik virus V6 family.

It localises to the virion. The polypeptide is Structural protein V8 (Sputnik virophage).